The chain runs to 217 residues: Probable glutathione S-transferase DHAR4 (217 aa).

2 residues coordinate glutathione: Lys8 and Asp19. Residues Lys8 and Asp19 each contribute to the L-ascorbate site. The GST N-terminal domain occupies 10-85 (ASGAPDVLGD…DLIVGIIEEK (76 aa)). Cys20 functions as the Nucleophile in the catalytic mechanism. The Glutathione-binding motif lies at 20 to 25 (CPFGQR). Glutathione-binding residues include Lys47, Ser75, His164, and Trp211. In terms of domain architecture, GST C-terminal spans 86–217 (YPEPSLVTFP…IASWAPKLDV (132 aa)). Position 214 (Lys214) interacts with L-ascorbate.

Belongs to the GST superfamily. DHAR family. In terms of assembly, monomer.

It is found in the cytoplasm. It localises to the cytosol. The enzyme catalyses RX + glutathione = an S-substituted glutathione + a halide anion + H(+). It carries out the reaction L-dehydroascorbate + 2 glutathione = glutathione disulfide + L-ascorbate. Its function is as follows. Exhibits glutathione-dependent thiol transferase and dehydroascorbate (DHA) reductase activities. The protein is Probable glutathione S-transferase DHAR4 (DHAR4) of Arabidopsis thaliana (Mouse-ear cress).